The primary structure comprises 270 residues: 4-hydroxy-tetrahydrodipicolinate reductase (270 aa).

NAD(+)-binding positions include 11–16 (GAGGRM) and Glu37. An NADP(+)-binding site is contributed by Arg38. NAD(+) contacts are provided by residues 101 to 103 (GTT) and 125 to 128 (APNM). The active-site Proton donor/acceptor is His158. Position 159 (His159) interacts with (S)-2,3,4,5-tetrahydrodipicolinate. The active-site Proton donor is Lys162. 168–169 (GT) is a (S)-2,3,4,5-tetrahydrodipicolinate binding site.

Belongs to the DapB family.

The protein localises to the cytoplasm. It catalyses the reaction (S)-2,3,4,5-tetrahydrodipicolinate + NAD(+) + H2O = (2S,4S)-4-hydroxy-2,3,4,5-tetrahydrodipicolinate + NADH + H(+). The catalysed reaction is (S)-2,3,4,5-tetrahydrodipicolinate + NADP(+) + H2O = (2S,4S)-4-hydroxy-2,3,4,5-tetrahydrodipicolinate + NADPH + H(+). It functions in the pathway amino-acid biosynthesis; L-lysine biosynthesis via DAP pathway; (S)-tetrahydrodipicolinate from L-aspartate: step 4/4. Functionally, catalyzes the conversion of 4-hydroxy-tetrahydrodipicolinate (HTPA) to tetrahydrodipicolinate. This is 4-hydroxy-tetrahydrodipicolinate reductase from Shewanella sp. (strain W3-18-1).